The sequence spans 164 residues: Crossover junction endodeoxyribonuclease RuvC (164 aa).

Catalysis depends on residues Asp7, Glu67, and Asp139. Residues Asp7, Glu67, and Asp139 each contribute to the Mg(2+) site.

It belongs to the RuvC family. In terms of assembly, homodimer which binds Holliday junction (HJ) DNA. The HJ becomes 2-fold symmetrical on binding to RuvC with unstacked arms; it has a different conformation from HJ DNA in complex with RuvA. In the full resolvosome a probable DNA-RuvA(4)-RuvB(12)-RuvC(2) complex forms which resolves the HJ. Mg(2+) serves as cofactor.

Its subcellular location is the cytoplasm. It catalyses the reaction Endonucleolytic cleavage at a junction such as a reciprocal single-stranded crossover between two homologous DNA duplexes (Holliday junction).. Functionally, the RuvA-RuvB-RuvC complex processes Holliday junction (HJ) DNA during genetic recombination and DNA repair. Endonuclease that resolves HJ intermediates. Cleaves cruciform DNA by making single-stranded nicks across the HJ at symmetrical positions within the homologous arms, yielding a 5'-phosphate and a 3'-hydroxyl group; requires a central core of homology in the junction. The consensus cleavage sequence is 5'-(A/T)TT(C/G)-3'. Cleavage occurs on the 3'-side of the TT dinucleotide at the point of strand exchange. HJ branch migration catalyzed by RuvA-RuvB allows RuvC to scan DNA until it finds its consensus sequence, where it cleaves and resolves the cruciform DNA. In Geobacter sulfurreducens (strain ATCC 51573 / DSM 12127 / PCA), this protein is Crossover junction endodeoxyribonuclease RuvC.